The sequence spans 452 residues: NADH-cytochrome b5 reductase-like protein alnC (452 aa).

The region spanning Pro-4–Gln-80 is the Cytochrome b5 heme-binding domain. Residue Ala-33–Asp-38 coordinates FMN. 2 residues coordinate heme: His-39 and His-63. FMN contacts are provided by residues Gln-80–Thr-83 and Asn-116–Pro-125. 2 consecutive transmembrane segments (helical) span residues Lys-120 to Leu-140 and Val-166 to Val-186. Residues Asn-225–Ser-324 form the FAD-binding FR-type domain. Residue Tyr-302–Asn-305 participates in FAD binding. NADP(+) contacts are provided by residues Gly-389–Gln-390 and Trp-395–Arg-399.

Belongs to the flavoprotein pyridine nucleotide cytochrome reductase family. Requires FAD as cofactor. FMN is required as a cofactor.

It localises to the membrane. It functions in the pathway polyketide biosynthesis. In terms of biological role, NADH-cytochrome b5 reductase-like protein; part of the gene cluster that mediates the biosynthesis of asperlin, a polyketide showing anti-inflammatory, antitumor and antibiotic activities. The first step of the asperlin biosynthesis is the production of the intermediate 2,4,6-octatrienoic acid by the highly redusing polyketide synthase alnA with cleavage of the PKS product by the esterase alnB. 2,4,6-octatrienoic acid is further converted to asperlin via several steps involving the remaining enzymes from the cluster. In Emericella nidulans (strain FGSC A4 / ATCC 38163 / CBS 112.46 / NRRL 194 / M139) (Aspergillus nidulans), this protein is NADH-cytochrome b5 reductase-like protein alnC.